Consider the following 388-residue polypeptide: G2/mitotic-specific cyclin-B2 (388 aa).

Residues 46 to 67 (ATNGKVGPSKKPSKASCVQKPK) form a disordered region.

The protein belongs to the cyclin family. Cyclin AB subfamily. Interacts with the CDK1 protein kinase to form a serine/threonine kinase holoenzyme complex also known as maturation promoting factor (MPF). The cyclin subunit imparts substrate specificity to the complex.

Its function is as follows. Essential for the control of the cell cycle at the G2/M (mitosis) transition. The sequence is that of G2/mitotic-specific cyclin-B2 (ccnb2) from Oryzias curvinotus (Hynann ricefish).